Here is an 835-residue protein sequence, read N- to C-terminus: Leucine--tRNA ligase (835 aa).

A 'HIGH' region motif is present at residues 36 to 46 (PYPSGKIHVGH). Positions 602–606 (KMSKS) match the 'KMSKS' region motif. Lys-605 lines the ATP pocket.

It belongs to the class-I aminoacyl-tRNA synthetase family.

It is found in the cytoplasm. The enzyme catalyses tRNA(Leu) + L-leucine + ATP = L-leucyl-tRNA(Leu) + AMP + diphosphate. This Rickettsia africae (strain ESF-5) protein is Leucine--tRNA ligase.